The chain runs to 245 residues: tRNA (guanine-N(1)-)-methyltransferase (245 aa).

Glycine 114 contributes to the S-adenosyl-L-methionine binding site.

This sequence belongs to the RNA methyltransferase TrmD family. Homodimer.

The protein localises to the cytoplasm. It carries out the reaction guanosine(37) in tRNA + S-adenosyl-L-methionine = N(1)-methylguanosine(37) in tRNA + S-adenosyl-L-homocysteine + H(+). Its function is as follows. Specifically methylates guanosine-37 in various tRNAs. The chain is tRNA (guanine-N(1)-)-methyltransferase from Sphingopyxis alaskensis (strain DSM 13593 / LMG 18877 / RB2256) (Sphingomonas alaskensis).